The primary structure comprises 618 residues: Tyrosine-protein kinase ZAP-70 (618 aa).

Positions 10–102 constitute an SH2 1 domain; the sequence is FFYGSISRAE…GLPCNLRKPC (93 aa). Positions 103 to 162 are interdomain A; the sequence is NRPPGLEPQPGVFDCLRDAMVRDYVRQTWKLEGDALEQAIISQAPQVEKLIATTAHERMP. The SH2 2 domain occupies 163-254; it reads WYHSSLTREE…GLIYRLKEVC (92 aa). Position 248 is a phosphotyrosine (tyrosine 248). Residues 255 to 336 form an interdomain B region; the sequence is PNSSASAAVA…KKLFLKRENL (82 aa). The segment at 270–320 is disordered; the sequence is AHPSTFTQPQRRVDTLNSDGYTPEPARLASSTDKPRPMPMDTSVYESPYSD. Residues 273 to 289 show a composition bias toward polar residues; sequence STFTQPQRRVDTLNSDG. Serine 287 is modified (phosphoserine). Tyrosine 290 bears the Phosphotyrosine mark. Tyrosine 314 is subject to Phosphotyrosine; by LCK. Residue tyrosine 318 is modified to Phosphotyrosine. Positions 337–597 constitute a Protein kinase domain; sequence LVADIELGCG…VEQRMRNYYY (261 aa). Residues 343–351 and lysine 368 contribute to the ATP site; that span reads LGCGNFGSV. The active-site Proton acceptor is the aspartate 460. A phosphotyrosine mark is found at tyrosine 491 and tyrosine 492. Lysine 543 participates in a covalent cross-link: Glycyl lysine isopeptide (Lys-Gly) (interchain with G-Cter in ubiquitin).

The protein belongs to the protein kinase superfamily. Tyr protein kinase family. SYK/ZAP-70 subfamily. Interacts with CD247/CD3Z; this interaction docks ZAP70 at the stimulated TCR. Interacts with NFAM1. Interacts with adapter protein SLA; this interaction negatively regulates T-cell receptor signaling. Interacts with VAV1. Interacts with CBL; this interaction promotes ubiquitination, internalization and subsequent degradation of CD247/CD3Z. Identified in a complex with CBL and UBE2L3. Interacts with SHB. Interacts with adapter protein SLA2; this interaction negatively regulates T-cell receptor signaling. Interacts with CBLB. Interacts (via SH2 domains) with RHOH; this interaction regulates ZAP70 subcellular localization. Interacts with DEF6. Interacts (ubiquitinated form) with OTUD7B and UBASH3B. Post-translationally, phosphorylated on tyrosine residues upon T-cell antigen receptor (TCR) stimulation. Phosphorylation of Tyr-314 and Tyr-314 are essential for ZAP70 positive function on T-lymphocyte activation whereas Tyr-290 has a negative regulatory role. Within the C-terminal kinase domain, Tyr-491 and Tyr-492 are phosphorylated after TCR induction, Tyr-491 playing a negative regulatory role and Tyr-492 a positive. Tyr-492 is dephosphorylated by PTN22. Ubiquitinated in response to T cell activation. Deubiquitinated by OTUD7B. In terms of tissue distribution, isoform 1 and isoform 2 are expressed in thymus, spleen and lymph nodes.

The protein localises to the cytoplasm. The protein resides in the cell membrane. It catalyses the reaction L-tyrosyl-[protein] + ATP = O-phospho-L-tyrosyl-[protein] + ADP + H(+). With respect to regulation, activated by phosphorylation at Tyr-492 in the activation loop. Functionally, tyrosine kinase that plays an essential role in regulation of the adaptive immune response. Regulates motility, adhesion and cytokine expression of mature T-cells, as well as thymocyte development. Also contributes to the development and activation of primary B-lymphocytes. When antigen presenting cells (APC) activate T-cell receptor (TCR), a serie of phosphorylations lead to the recruitment of ZAP70 to the doubly phosphorylated TCR component CD3Z through ITAM motif at the plasma membrane. This recruitment serves to localization to the stimulated TCR and to relieve its autoinhibited conformation. Release of ZAP70 active conformation is further stabilized by phosphorylation mediated by LCK. Subsequently, ZAP70 phosphorylates at least 2 essential adapter proteins: LAT and LCP2. In turn, a large number of signaling molecules are recruited and ultimately lead to lymphokine production, T-cell proliferation and differentiation. Furthermore, ZAP70 controls cytoskeleton modifications, adhesion and mobility of T-lymphocytes, thus ensuring correct delivery of effectors to the APC. ZAP70 is also required for TCR-CD3Z internalization and degradation through interaction with the E3 ubiquitin-protein ligase CBL and adapter proteins SLA and SLA2. Thus, ZAP70 regulates both T-cell activation switch on and switch off by modulating TCR expression at the T-cell surface. During thymocyte development, ZAP70 promotes survival and cell-cycle progression of developing thymocytes before positive selection (when cells are still CD4/CD8 double negative). Additionally, ZAP70-dependent signaling pathway may also contribute to primary B-cells formation and activation through B-cell receptor (BCR). The chain is Tyrosine-protein kinase ZAP-70 (Zap70) from Mus musculus (Mouse).